The sequence spans 514 residues: Putative selenium-binding protein (514 aa).

This sequence belongs to the selenium-binding protein family.

This is Putative selenium-binding protein from Caenorhabditis briggsae.